The following is a 188-amino-acid chain: Adenine phosphoribosyltransferase (188 aa).

It belongs to the purine/pyrimidine phosphoribosyltransferase family. In terms of assembly, homodimer.

It localises to the cytoplasm. It carries out the reaction AMP + diphosphate = 5-phospho-alpha-D-ribose 1-diphosphate + adenine. It participates in purine metabolism; AMP biosynthesis via salvage pathway; AMP from adenine: step 1/1. Its function is as follows. Catalyzes a salvage reaction resulting in the formation of AMP, that is energically less costly than de novo synthesis. In Paraburkholderia phymatum (strain DSM 17167 / CIP 108236 / LMG 21445 / STM815) (Burkholderia phymatum), this protein is Adenine phosphoribosyltransferase.